Consider the following 573-residue polypeptide: Threonine--tRNA ligase (573 aa).

The tract at residues 174–474 (DHRRINKILE…LLEQTKGALD (301 aa)) is catalytic. Zn(2+)-binding residues include Cys-268, His-319, and His-451.

Belongs to the class-II aminoacyl-tRNA synthetase family. As to quaternary structure, homodimer. Zn(2+) is required as a cofactor.

The protein localises to the cytoplasm. It catalyses the reaction tRNA(Thr) + L-threonine + ATP = L-threonyl-tRNA(Thr) + AMP + diphosphate + H(+). Functionally, catalyzes the attachment of threonine to tRNA(Thr) in a two-step reaction: L-threonine is first activated by ATP to form Thr-AMP and then transferred to the acceptor end of tRNA(Thr). Also edits incorrectly charged L-seryl-tRNA(Thr). The protein is Threonine--tRNA ligase of Mycoplasmoides gallisepticum (strain R(low / passage 15 / clone 2)) (Mycoplasma gallisepticum).